The sequence spans 766 residues: Protein transport protein Sec23B (766 aa).

Ala-2 bears the N-acetylalanine mark. Residues Cys-61, Cys-66, Cys-85, and Cys-88 each contribute to the Zn(2+) site. Lys-564 bears the N6-acetyllysine mark. Residues 633–719 form a Gelsolin-like repeat; it reads PEPVLLDSSS…EHGGSQARFL (87 aa).

It belongs to the SEC23/SEC24 family. SEC23 subfamily. COPII is composed of at least five proteins: the Sec23/24 complex, the Sec13/31 complex and Sar1. Interacts with SAR1A.

It is found in the cytoplasmic vesicle. The protein localises to the COPII-coated vesicle membrane. It localises to the endoplasmic reticulum membrane. The protein resides in the cytoplasm. Its subcellular location is the cytosol. Component of the coat protein complex II (COPII) which promotes the formation of transport vesicles from the endoplasmic reticulum (ER). The coat has two main functions, the physical deformation of the endoplasmic reticulum membrane into vesicles and the selection of cargo molecules for their transport to the Golgi complex. The polypeptide is Protein transport protein Sec23B (Pongo abelii (Sumatran orangutan)).